A 273-amino-acid polypeptide reads, in one-letter code: Gap junction beta-5 protein (273 aa).

Topologically, residues 1 to 20 (MNWSIFEGLLSGVNKYSTAF) are cytoplasmic. Residues 21 to 40 (GRIWLSLVFIFRVLVYLVTA) form a helical membrane-spanning segment. Residues 41-75 (ERVWSDDHKDFDCNTRQPGCSNVCFDEFFPVSHVR) lie on the Extracellular side of the membrane. The helical transmembrane segment at 76-98 (LWALQLILVTCPSLLVVMHVAYR) threads the bilayer. The Cytoplasmic segment spans residues 99–126 (EVQEKRHREAHGENSGRLYLNPGKKRGG). Residues 127–149 (LWWTYVCSLVFKASVDIAFLYVF) form a helical membrane-spanning segment. At 150 to 187 (HSFYPKYILPPVVKCHADPCPNIVDCFISKPSEKNIFT) the chain is on the extracellular side. The helical transmembrane segment at 188–210 (LFMVATAAICILLNLVELIYLVS) threads the bilayer. The Cytoplasmic portion of the chain corresponds to 211–273 (KRCHECLAAR…PRDHVKKTIL (63 aa)).

Belongs to the connexin family. Beta-type (group I) subfamily. A connexon is composed of a hexamer of connexins.

The protein localises to the cell membrane. It is found in the cell junction. Its subcellular location is the gap junction. One gap junction consists of a cluster of closely packed pairs of transmembrane channels, the connexons, through which materials of low MW diffuse from one cell to a neighboring cell. The sequence is that of Gap junction beta-5 protein (GJB5) from Homo sapiens (Human).